The following is a 213-amino-acid chain: Putative nascent polypeptide-associated complex subunit alpha-like protein (213 aa).

The disordered stretch occupies residues 1 to 46; that stretch reads MPGEATETVPAIEQQLLQPQAETGSGTESDSDESVPELEEQDSTQV. Residues 15-28 show a composition bias toward polar residues; the sequence is QLLQPQAETGSGTE. Residues 29–42 show a composition bias toward acidic residues; it reads SDSDESVPELEEQD. Phosphoserine occurs at positions 43 and 131. Residues 69–134 form the NAC-A/B domain; it reads RRSEKKARKA…AKIEDLSQEA (66 aa). Residue K141 is modified to N6-acetyllysine; alternate. A Glycyl lysine isopeptide (Lys-Gly) (interchain with G-Cter in SUMO2); alternate cross-link involves residue K141. The residue at position 160 (T160) is a Phosphothreonine. 3 positions are modified to phosphoserine: S165, S185, and S201. Residues 175 to 211 form the UBA domain; the sequence is VEIKDIELVLSQANVWGAKAVRALKNSNDIVNAIMEL. Position 212 is a phosphothreonine (T212).

It belongs to the NAC-alpha family.

This is Putative nascent polypeptide-associated complex subunit alpha-like protein from Homo sapiens (Human).